Reading from the N-terminus, the 68-residue chain is Protein SlyX homolog (68 aa).

This sequence belongs to the SlyX family.

This is Protein SlyX homolog from Brucella melitensis biotype 1 (strain ATCC 23456 / CCUG 17765 / NCTC 10094 / 16M).